The chain runs to 434 residues: Adenylosuccinate synthetase (434 aa).

GTP-binding positions include 15 to 21 (GDEGKGK) and 43 to 45 (GHT). Aspartate 16 acts as the Proton acceptor in catalysis. 2 residues coordinate Mg(2+): aspartate 16 and glycine 43. Residues 16–19 (DEGK), 41–44 (NAGH), threonine 133, arginine 147, glutamine 228, threonine 243, and arginine 307 contribute to the IMP site. Histidine 44 (proton donor) is an active-site residue. Residue 303 to 309 (SVTGRAR) coordinates substrate. Residues arginine 309, 335–337 (KLD), and 418–420 (STG) contribute to the GTP site.

The protein belongs to the adenylosuccinate synthetase family. As to quaternary structure, homodimer. Mg(2+) is required as a cofactor.

The protein localises to the cytoplasm. The catalysed reaction is IMP + L-aspartate + GTP = N(6)-(1,2-dicarboxyethyl)-AMP + GDP + phosphate + 2 H(+). It participates in purine metabolism; AMP biosynthesis via de novo pathway; AMP from IMP: step 1/2. Its function is as follows. Plays an important role in the de novo pathway of purine nucleotide biosynthesis. Catalyzes the first committed step in the biosynthesis of AMP from IMP. The protein is Adenylosuccinate synthetase of Neisseria meningitidis serogroup C / serotype 2a (strain ATCC 700532 / DSM 15464 / FAM18).